The chain runs to 189 residues: Peptidyl-tRNA hydrolase (189 aa).

TRNA is bound at residue Tyr-15. The active-site Proton acceptor is the His-20. TRNA is bound by residues Tyr-64, Asn-66, and Asn-112.

It belongs to the PTH family. In terms of assembly, monomer.

The protein localises to the cytoplasm. The enzyme catalyses an N-acyl-L-alpha-aminoacyl-tRNA + H2O = an N-acyl-L-amino acid + a tRNA + H(+). Its function is as follows. Hydrolyzes ribosome-free peptidyl-tRNAs (with 1 or more amino acids incorporated), which drop off the ribosome during protein synthesis, or as a result of ribosome stalling. Catalyzes the release of premature peptidyl moieties from peptidyl-tRNA molecules trapped in stalled 50S ribosomal subunits, and thus maintains levels of free tRNAs and 50S ribosomes. The sequence is that of Peptidyl-tRNA hydrolase from Sulfurihydrogenibium sp. (strain YO3AOP1).